The chain runs to 263 residues: 4-hydroxy-tetrahydrodipicolinate reductase (263 aa).

NAD(+) is bound by residues 8 to 13 (GACGRM), aspartate 34, 99 to 101 (GTT), and 125 to 128 (SPNY). Catalysis depends on histidine 157, which acts as the Proton donor/acceptor. (S)-2,3,4,5-tetrahydrodipicolinate is bound at residue histidine 158. Lysine 161 acts as the Proton donor in catalysis. Residue 167-168 (GT) coordinates (S)-2,3,4,5-tetrahydrodipicolinate.

This sequence belongs to the DapB family.

It is found in the cytoplasm. It carries out the reaction (S)-2,3,4,5-tetrahydrodipicolinate + NAD(+) + H2O = (2S,4S)-4-hydroxy-2,3,4,5-tetrahydrodipicolinate + NADH + H(+). It catalyses the reaction (S)-2,3,4,5-tetrahydrodipicolinate + NADP(+) + H2O = (2S,4S)-4-hydroxy-2,3,4,5-tetrahydrodipicolinate + NADPH + H(+). It participates in amino-acid biosynthesis; L-lysine biosynthesis via DAP pathway; (S)-tetrahydrodipicolinate from L-aspartate: step 4/4. In terms of biological role, catalyzes the conversion of 4-hydroxy-tetrahydrodipicolinate (HTPA) to tetrahydrodipicolinate. This Methanosarcina barkeri (strain Fusaro / DSM 804) protein is 4-hydroxy-tetrahydrodipicolinate reductase.